Here is an 863-residue protein sequence, read N- to C-terminus: Glycerol-3-phosphate acyltransferase (863 aa).

The segment at 1-29 is disordered; that stretch reads MPKKNSPLLPKETTTTQSSVDTSGSSNLT. A compositionally biased stretch (polar residues) spans 12-29; the sequence is ETTTTQSSVDTSGSSNLT. The short motif at 343-348 is the HXXXXD motif element; the sequence is SHRSHM.

Belongs to the GPAT/DAPAT family.

The protein resides in the cell inner membrane. The enzyme catalyses sn-glycerol 3-phosphate + an acyl-CoA = a 1-acyl-sn-glycero-3-phosphate + CoA. Its pathway is phospholipid metabolism; CDP-diacylglycerol biosynthesis; CDP-diacylglycerol from sn-glycerol 3-phosphate: step 1/3. In Xylella fastidiosa (strain M23), this protein is Glycerol-3-phosphate acyltransferase.